The chain runs to 1501 residues: Protein SNQ2 (1501 aa).

The span at 1 to 17 (MSNIKSTQDSSHNAVAR) shows a compositional bias: polar residues. Residues 1–56 (MSNIKSTQDSSHNAVARSSSASFAASEESFTGITHDKDEQSDTPADKLTKMLTGPA) form a disordered region. Ser-2 bears the N-acetylserine mark. The segment covering 18–30 (SSSASFAASEESF) has biased composition (low complexity). A phosphoserine mark is found at Ser-26 and Ser-29. Residues 34-49 (THDKDEQSDTPADKLT) show a composition bias toward basic and acidic residues. 3 positions are modified to phosphoserine: Ser-64, Ser-80, and Ser-86. The ABC transporter 1 domain occupies 161 to 410 (FKGIKAKRHQ…FAKMGYLCPP (250 aa)). N-linked (GlcNAc...) asparagine glycans are attached at residues Asn-273, Asn-334, and Asn-518. The next 5 membrane-spanning stretches (helical) occupy residues 521 to 541 (YTVINVCSAIIQSFITGSLFY), 554 to 574 (GGVLYFALLYYSLMGLANISF), 600 to 620 (LASFPFRMIGLTCFFIILFFL), 628 to 648 (GSFFTIYLFLTMCSEAINGLF), and 664 to 680 (ISGILMMSISMYSTYMI). Asn-730 is a glycosylation site (N-linked (GlcNAc...) asparagine). The helical transmembrane segment at 771 to 789 (FGILWCFLLGYVVLKVIFT) threads the bilayer. One can recognise an ABC transporter 2 domain in the interval 853–1095 (FIWKDVCFTI…ILNYFERNGA (243 aa)). N-linked (GlcNAc...) asparagine glycosylation occurs at Asn-874. Residue 889–896 (GESGAGKT) coordinates ATP. Thr-1153 carries the phosphothreonine modification. 4 helical membrane-spanning segments follow: residues 1190–1212 (IMSKMMLMLVGGLYIGFTFFNVG), 1216–1236 (VGLQNAMFAAFISIILSAPAM), 1277–1296 (HLFFSTIFFVSSYFPLRIFF), and 1333–1352 (ANVILGLCLSFMLSFCGVTQ). Residue Asn-1401 is glycosylated (N-linked (GlcNAc...) asparagine). The helical transmembrane segment at 1455–1475 (FGIFWIYIFFNIIAMVCVYYL) threads the bilayer.

It belongs to the ABC transporter superfamily. ABCG family. PDR (TC 3.A.1.205) subfamily.

The protein resides in the membrane. In terms of biological role, could be an ATP-dependent permease. Confers hyper-resistance to the mutagens 4-nitroquinoline-N-oxide (4-NQO) and triaziquone, as well as to the chemicals sulphomethuron methyl phenanthroline when present in multiple copies. Exhibits nucleoside triphosphatase activity. This chain is Protein SNQ2 (SNQ2), found in Saccharomyces cerevisiae (strain ATCC 204508 / S288c) (Baker's yeast).